Consider the following 342-residue polypeptide: Phenylalanine--tRNA ligase alpha subunit (342 aa).

E255 serves as a coordination point for Mg(2+).

Belongs to the class-II aminoacyl-tRNA synthetase family. Phe-tRNA synthetase alpha subunit type 1 subfamily. In terms of assembly, tetramer of two alpha and two beta subunits. It depends on Mg(2+) as a cofactor.

The protein localises to the cytoplasm. It carries out the reaction tRNA(Phe) + L-phenylalanine + ATP = L-phenylalanyl-tRNA(Phe) + AMP + diphosphate + H(+). This Pelodictyon phaeoclathratiforme (strain DSM 5477 / BU-1) protein is Phenylalanine--tRNA ligase alpha subunit.